We begin with the raw amino-acid sequence, 261 residues long: Hydroxyethylthiazole kinase (261 aa).

Residue methionine 39 participates in substrate binding. ATP contacts are provided by arginine 115 and threonine 159. Glycine 186 serves as a coordination point for substrate.

Belongs to the Thz kinase family. It depends on Mg(2+) as a cofactor.

It catalyses the reaction 5-(2-hydroxyethyl)-4-methylthiazole + ATP = 4-methyl-5-(2-phosphooxyethyl)-thiazole + ADP + H(+). The protein operates within cofactor biosynthesis; thiamine diphosphate biosynthesis; 4-methyl-5-(2-phosphoethyl)-thiazole from 5-(2-hydroxyethyl)-4-methylthiazole: step 1/1. Catalyzes the phosphorylation of the hydroxyl group of 4-methyl-5-beta-hydroxyethylthiazole (THZ). This chain is Hydroxyethylthiazole kinase, found in Macrococcus caseolyticus (strain JCSC5402) (Macrococcoides caseolyticum).